The primary structure comprises 103 residues: Ribonuclease VapC14 (103 aa).

A PINc domain is found at 3–74 (YVLDTNVVSA…WFDDKVLRIF (72 aa)). Mg(2+) is bound at residue D6.

The protein belongs to the PINc/VapC protein family. Requires Mg(2+) as cofactor.

Functionally, toxic component of a type II toxin-antitoxin (TA) system. An RNase. The cognate antitoxin is VapB14. This is Ribonuclease VapC14 (vapC14) from Mycobacterium tuberculosis (strain CDC 1551 / Oshkosh).